The following is a 345-amino-acid chain: Tryptophan--tRNA ligase (345 aa).

ATP contacts are provided by residues 22–24 (QPS) and 30–31 (GN). The 'HIGH' region signature appears at 23–31 (PSGELTIGN). Position 146 (Asp-146) interacts with L-tryptophan. ATP is bound by residues 158 to 160 (GID), Val-197, and 206 to 210 (KMSKS). A 'KMSKS' region motif is present at residues 206-210 (KMSKS).

The protein belongs to the class-I aminoacyl-tRNA synthetase family. In terms of assembly, homodimer.

Its subcellular location is the cytoplasm. It catalyses the reaction tRNA(Trp) + L-tryptophan + ATP = L-tryptophyl-tRNA(Trp) + AMP + diphosphate + H(+). Catalyzes the attachment of tryptophan to tRNA(Trp). This is Tryptophan--tRNA ligase from Photorhabdus laumondii subsp. laumondii (strain DSM 15139 / CIP 105565 / TT01) (Photorhabdus luminescens subsp. laumondii).